The primary structure comprises 344 residues: Putative transport protein sll0060 (344 aa).

Transmembrane regions (helical) follow at residues 14–34 (LWIG…LQIL), 41–61 (LRIF…VRWL), 72–92 (AVAL…LLVI), 155–175 (LINL…IFIM), 215–235 (IGQA…LSIF), 237–257 (VPLA…PFGG), 262–282 (VLIS…VLAI), and 310–330 (ILLS…LVAI).

The protein belongs to the autoinducer-2 exporter (AI-2E) (TC 2.A.86) family.

It is found in the cell membrane. This Synechocystis sp. (strain ATCC 27184 / PCC 6803 / Kazusa) protein is Putative transport protein sll0060.